A 303-amino-acid polypeptide reads, in one-letter code: Small ribosomal subunit protein bS1m (303 aa).

At Ser2 the chain carries N-acetylserine. A mitochondrion; not cleaved-targeting transit peptide spans Ser2–Met13.

This sequence belongs to the bacterial ribosomal protein bS1 family. As to quaternary structure, component of the mitochondrial small ribosomal subunit (mt-SSU). Mature yeast 74S mitochondrial ribosomes consist of a small (37S) and a large (54S) subunit. The 37S small subunit contains a 15S ribosomal RNA (15S mt-rRNA) and at least 32 different proteins. The 54S large subunit contains a 21S rRNA (21S mt-rRNA) and at least 45 different proteins. This subunit is mutually exclusive with mug178/small ribosomal subunit protein L51-b.

The protein resides in the mitochondrion. Functionally, component of the mitochondrial ribosome (mitoribosome), a dedicated translation machinery responsible for the synthesis of mitochondrial genome-encoded proteins, including at least some of the essential transmembrane subunits of the mitochondrial respiratory chain. The mitoribosomes are attached to the mitochondrial inner membrane and translation products are cotranslationally integrated into the membrane. bS1m functionally interacts with the 5'-UTR of mitochondrial mRNAs. Plays an essential role in mitochondrial translation. This Schizosaccharomyces pombe (strain 972 / ATCC 24843) (Fission yeast) protein is Small ribosomal subunit protein bS1m (mrp51).